The sequence spans 379 residues: Protein RecA (379 aa).

Residues 1–14 (MSNEIKSISSSNSS) are compositionally biased toward low complexity. Residues 1–24 (MSNEIKSISSSNSSCPPNEARSGE) are disordered. Residue 84-91 (GPESSGKT) participates in ATP binding.

Belongs to the RecA family.

It is found in the cytoplasm. Its function is as follows. Can catalyze the hydrolysis of ATP in the presence of single-stranded DNA, the ATP-dependent uptake of single-stranded DNA by duplex DNA, and the ATP-dependent hybridization of homologous single-stranded DNAs. It interacts with LexA causing its activation and leading to its autocatalytic cleavage. The sequence is that of Protein RecA from Prochlorococcus marinus (strain SARG / CCMP1375 / SS120).